A 459-amino-acid polypeptide reads, in one-letter code: Vacuolar amino acid transporter 5 (459 aa).

8 helical membrane passes run 8–28, 33–53, 82–102, 131–151, 161–181, 206–226, 240–260, and 278–298; these read GVLTLLHTACGAGVLAMPFAF, LMPGLITLTFCGICSLCGLLL, VVFDFAIAVKCFGVGVSYLII, FLDRRLYITLIIVFVISPLCF, ASMIAIVSVAYLSGLIIYHFV, LTTLPIFVFAYTCHHNMFSVI, IPIFAIVLAYFLYIIIGGTGY, and SISTTIGRLAMLLLVMLAFPL. The span at 335–351 shows a compositional bias: polar residues; it reads FNSEDPQEAPTQQNNEE. Positions 335 to 354 are disordered; sequence FNSEDPQEAPTQQNNEEPNL. A run of 3 helical transmembrane segments spans residues 364–384, 386–406, and 434–454; these read IITLCILLFSYLLAISITSLA, VLAIVGATGSTSISFILPGLF, and LSLFIWGIAVMVASLSAIVFL.

The protein belongs to the amino acid/polyamine transporter 2 family.

Its subcellular location is the vacuole membrane. Its function is as follows. Probable amino acid transporter of unknown specificity. This chain is Vacuolar amino acid transporter 5 (AVT5), found in Saccharomyces cerevisiae (strain ATCC 204508 / S288c) (Baker's yeast).